The following is a 232-amino-acid chain: Small ribosomal subunit protein uS2 (232 aa).

Belongs to the universal ribosomal protein uS2 family.

The protein is Small ribosomal subunit protein uS2 of Baumannia cicadellinicola subsp. Homalodisca coagulata.